A 128-amino-acid polypeptide reads, in one-letter code: Ribosome-binding factor A (128 aa).

Belongs to the RbfA family. Monomer. Binds 30S ribosomal subunits, but not 50S ribosomal subunits or 70S ribosomes.

The protein localises to the cytoplasm. Its function is as follows. One of several proteins that assist in the late maturation steps of the functional core of the 30S ribosomal subunit. Associates with free 30S ribosomal subunits (but not with 30S subunits that are part of 70S ribosomes or polysomes). Required for efficient processing of 16S rRNA. May interact with the 5'-terminal helix region of 16S rRNA. This chain is Ribosome-binding factor A, found in Microcystis aeruginosa (strain NIES-843 / IAM M-2473).